The chain runs to 619 residues: Telomere repeat-binding protein 3 (619 aa).

The Ubiquitin-like domain maps to 324–403; that stretch reads VKLSIKSFRI…LDNLGFTLEP (80 aa). In terms of domain architecture, HTH myb-type spans 504 to 563; it reads AQRRTRRPFSVTEVEALVQAVEELGTGRWRDVKLRAFEDADHRTYVDLKDKWKTLVHTAS. Positions 532–559 form a DNA-binding region, H-T-H motif; that stretch reads WRDVKLRAFEDADHRTYVDLKDKWKTLV. The interval 593–619 is disordered; the sequence is QGKHQARGASKDPDMNRGGAFESGVSV.

As to quaternary structure, homodimer and heterodimer with TRP1. In terms of tissue distribution, expressed ubiquitously. Highest expression in flowers and roots.

The protein localises to the nucleus. Functionally, binds specifically to the plant telomeric double-stranded DNA sequences. At least 2 repeats of telomeric sequences are required for binding. Induces DNA bending. This chain is Telomere repeat-binding protein 3 (TRP3), found in Arabidopsis thaliana (Mouse-ear cress).